The sequence spans 281 residues: MKLYRSLKAALLPGICTSILLASCASTNTYQDQRNALISLASNRDTLIANAKKSKEEVQKEVTKMNSSTSSMMTATQSVAITTHQTTEKTNNSKYDLDKLFKDYILYVVDNFSGLVFKRTGGHRIQLIDKDKEILDGGNLTKHTHHDHNHMHNHEHEHEEHHDEEETEVVGRALSFTNGIFLVIDYKKDSERKNMSGSTTMMHQHHHEAEEHKEERKLSLNLKAYKFNTPFNISEFISAWHHKESHNSDTEFNNLHNKYDKEELDIIDYNFEEKAVDETIA.

A signal peptide spans 1–23 (MKLYRSLKAALLPGICTSILLAS). Cys-24 is lipidated: N-palmitoyl cysteine. A lipid anchor (S-diacylglycerol cysteine) is attached at Cys-24. The segment at 145–165 (HHDHNHMHNHEHEHEEHHDEE) is disordered. Basic and acidic residues predominate over residues 150–161 (HMHNHEHEHEEH).

It is found in the cell membrane. This is an uncharacterized protein from Mycoplasma genitalium (strain ATCC 33530 / DSM 19775 / NCTC 10195 / G37) (Mycoplasmoides genitalium).